The chain runs to 348 residues: Signal recognition particle receptor FtsY (348 aa).

GTP contacts are provided by residues 143 to 150 (GVNGVGKT), 225 to 229 (DTSGR), and 289 to 292 (TKMD).

This sequence belongs to the GTP-binding SRP family. FtsY subfamily. As to quaternary structure, part of the signal recognition particle protein translocation system, which is composed of SRP and FtsY.

Its subcellular location is the cell membrane. It localises to the cytoplasm. The enzyme catalyses GTP + H2O = GDP + phosphate + H(+). Functionally, involved in targeting and insertion of nascent membrane proteins into the cytoplasmic membrane. Acts as a receptor for the complex formed by the signal recognition particle (SRP) and the ribosome-nascent chain (RNC). The chain is Signal recognition particle receptor FtsY from Mycoplasma pneumoniae (strain ATCC 29342 / M129 / Subtype 1) (Mycoplasmoides pneumoniae).